A 199-amino-acid polypeptide reads, in one-letter code: Recombination protein RecR (199 aa).

A C4-type zinc finger spans residues 57 to 72 (CSICGNFTDRDPCRLC). Residues 80-175 (SCICVVEEAR…KVTRLAYGLP (96 aa)) form the Toprim domain.

Belongs to the RecR family.

Its function is as follows. May play a role in DNA repair. It seems to be involved in an RecBC-independent recombinational process of DNA repair. It may act with RecF and RecO. The sequence is that of Recombination protein RecR from Moorella thermoacetica (strain ATCC 39073 / JCM 9320).